Reading from the N-terminus, the 602-residue chain is NAD-dependent protein deacetylase sir-2.1 (602 aa).

The tract at residues 25–57 (PEIETMHIENSVEGESGRQRTESTASVNSESWQ) is disordered. Positions 46–57 (ESTASVNSESWQ) are enriched in polar residues. The Deacetylase sirtuin-type domain occupies 119-374 (KLFTYNSLSD…RDICYALGGS (256 aa)). NAD(+)-binding positions include 144 to 163 (GAGVSVSCGIPDFRSKDGIY) and 228 to 231 (QNID). Catalysis depends on His246, which acts as the Proton acceptor. 4 residues coordinate Zn(2+): Cys254, Cys257, Cys278, and Cys281. NAD(+) contacts are provided by residues 318–320 (GSS), 343–345 (NRE), and Cys360. Disordered regions lie at residues 411–468 (QERR…SDEV) and 520–551 (RNRHESDSSCESCSTVPGSDKSEANPLSRSQS).

This sequence belongs to the sirtuin family. Class I subfamily. Interacts with ftt-2 and par-5. Interacts with daf-16 following heat-shock, which causes daf-16 to accumulate in the nucleus. Interaction with daf-16 is promoted by ftt-2. It depends on Zn(2+) as a cofactor.

It is found in the nucleus. It catalyses the reaction N(6)-acetyl-L-lysyl-[protein] + NAD(+) + H2O = 2''-O-acetyl-ADP-D-ribose + nicotinamide + L-lysyl-[protein]. Functionally, NAD-dependent deacetylase. Required for a reduction of the 'Lys-16' acetylation of histone H4 (H4K16ac) on dosage-compensated X chromosomes in hermaphrodites. Functions upstream of daf-16 in the insulin-like signaling pathway, promoting daf-16 mediated transcriptional activation and increased life-span. May also regulate life-span independently of daf-16 by modulating the transcription of genes involved in the stress response of the endoplasmic reticulum (ER). Acts upstream of the nicotinic acid metabolism pathway, which may be linked to the regulation of longevity. Plays a role in ascaroside-mediated longevity and stress resistance. The chain is NAD-dependent protein deacetylase sir-2.1 (sir-2.1) from Caenorhabditis briggsae.